The chain runs to 408 residues: L,D-transpeptidase 2 (408 aa).

The N-terminal stretch at 1 to 34 (MPKVGIAAQAGRTRVRRAWLTALMMTAVMIGAVA) is a signal peptide. Cys35 is lipidated: N-palmitoyl cysteine. Cys35 is lipidated: S-diacylglycerol cysteine. The Ca(2+) site is built by Asp232, Glu235, and Gly236. A L,D-TPase catalytic domain is found at 253–378 (VIATADDNTK…VKRGDIVEVV (126 aa)). Substrate is bound by residues Tyr318 and 331–332 (SG). Catalysis depends on His336, which acts as the Proton donor/acceptor. The active-site Nucleophile is Cys354. Asn356 is a substrate binding site.

Monomer.

The protein resides in the cell membrane. It participates in cell wall biogenesis; peptidoglycan biosynthesis. With respect to regulation, is irreversibly inactivated by the beta-lactams carbapenems via the formation of a covalent adduct resulting from acylation of the catalytic Cys. Its function is as follows. Generates 3-&gt;3 cross-links in peptidoglycan, catalyzing the cleavage of the mDap(3)-D-Ala(4) bond of a tetrapeptide donor stem and the formation of a bond between the carbonyl of mDap(3) of the donor stem and the side chain of mDap(3) of the acceptor stem. Is specific for donor substrates containing a stem tetrapeptide since it cannot use pentapeptide stems. Is essential for virulence in a mouse model of acute infection. This Mycobacterium tuberculosis (strain CDC 1551 / Oshkosh) protein is L,D-transpeptidase 2 (ldtB).